The sequence spans 614 residues: MIKKASLLTACSVTAFSAWAQDTSPDTLVVTANRFEQPRSTVLAPTTVVTRQDIDRWQSTSVNDVLRRLPGVDITQNGGSGQLSSIFIRGTNASHVLVLIDGVRLNLAGVSGSADLSQFPIALVQRVEYIRGPRSAVYGSDAIGGVVNIITTRDHPGTEISAGWGSNSYQNYDVSTQQQLGDKTRVTLLGDYAHTHGYDVVAYGNTGTQAQPDNDGFLSKTLYGALEHNFTDVWSGFVRGYGYDNRTNYDAYYSPGLPLVDTRKLYSQSWDAGLRYNGELIKSQLITSYSHSKDYNYDPHYGRYDSSATLDEMKQYTVQWANNIIIGHGNIGAGVDWQKQSTAPGTAYVEDGYDQRNTGIYLTGLQQVGDFTFEGAGRSDDNSQFGRHGTWQTSAGWEFIEGYRFIASYGTSYKAPNLGQLYGTYGNPNLNPEKSKQWEGAFEGLTAGVNWRISGYRNDVSDLIDYDDHTLKYYNEGKARIKGVEATANFDTGPLTHTVSYDYVDARNAITDTPLLRRAKQQVKYQLDWQLYDFDWGITYQYLGTRYDKDYSSYPYQTVKMGGVSLWDLAVAYPVTSHLTVRGKIANLFDKDYETVYGYQTAGREYTLSGSYTF.

An N-terminal signal peptide occupies residues 1–20 (MIKKASLLTACSVTAFSAWA). The TonB box signature appears at 26–33 (DTLVVTAN). A TBDR plug domain is found at 38–152 (PRSTVLAPTT…IGGVVNIITT (115 aa)). Cyanocob(III)alamin-binding positions include Leu-83, Ser-85, Asn-92, and 110–111 (VS). The 460-residue stretch at 155–614 (HPGTEISAGW…EYTLSGSYTF (460 aa)) folds into the TBDR beta-barrel domain. 3 beta stranded membrane-spanning segments follow: residues 158 to 165 (TEISAGWG), 169 to 178 (YQNYDVSTQQ), and 184 to 195 (TRVTLLGDYAHT). Asp-199, Gln-211, Asp-213, and Asp-215 together coordinate Ca(2+). 2 beta stranded membrane passes run 217–227 (FLSKTLYGALE) and 232–248 (DVWS…NRTN). 2 residues coordinate Ca(2+): Tyr-249 and Asp-250. Ala-251 lines the cyanocob(III)alamin pocket. Residue Asp-261 participates in Ca(2+) binding. 14 beta stranded membrane passes run 263–277 (RKLY…LRYN), 279–296 (ELIK…KDYN), 309–325 (TLDE…NNII), 328–337 (HGNIGAGVDW), 353–369 (YDQR…QQVG), 371–381 (FTFEGAGRSDD), 385–400 (FGRH…WEFI), 403–417 (YRFI…KAPN), 434–443 (KSKQWEGAFE), 449–458 (VNWRISGYRN), 473–490 (YYNE…TANF), 494–509 (PLTH…ARNA), 517–529 (RRAK…QLDW), and 535–550 (DWGI…YDKD). A cyanocob(III)alamin-binding site is contributed by Thr-309. Residue Arg-517 participates in cyanocob(III)alamin binding. Residue Tyr-551 participates in cyanocob(III)alamin binding. The next 3 beta stranded transmembrane spans lie at 558–572 (TVKM…LAVA), 585–596 (IANLFDKDYETV), and 602–614 (AGRE…SYTF). Positions 597-614 (YGYQTAGREYTLSGSYTF) match the TonB C-terminal box motif.

It belongs to the TonB-dependent receptor family. BtuB (TC 1.B.14.3.1) subfamily.

Its subcellular location is the cell outer membrane. Its function is as follows. Involved in the active translocation of vitamin B12 (cyanocobalamin) across the outer membrane to the periplasmic space. It derives its energy for transport by interacting with the trans-periplasmic membrane protein TonB. The polypeptide is Vitamin B12 transporter BtuB (Escherichia coli O1:K1 / APEC).